Here is a 235-residue protein sequence, read N- to C-terminus: Large ribosomal subunit protein uL4 (235 aa).

Residues 45 to 75 (RAGTASTKTRGEVSGGGRKPWPQKHTGRARH) are disordered. Basic residues predominate over residues 65–75 (WPQKHTGRARH).

It belongs to the universal ribosomal protein uL4 family. Part of the 50S ribosomal subunit.

Functionally, one of the primary rRNA binding proteins, this protein initially binds near the 5'-end of the 23S rRNA. It is important during the early stages of 50S assembly. It makes multiple contacts with different domains of the 23S rRNA in the assembled 50S subunit and ribosome. In terms of biological role, forms part of the polypeptide exit tunnel. This Thermotoga petrophila (strain ATCC BAA-488 / DSM 13995 / JCM 10881 / RKU-1) protein is Large ribosomal subunit protein uL4.